Reading from the N-terminus, the 377-residue chain is Stimulator of interferon genes protein (377 aa).

Topologically, residues 1 to 21 are cytoplasmic; sequence MRRAEENNGFGTIPKRRNQHT. The chain crosses the membrane as a helical span at residues 22 to 42; it reads PFYASIGMIVVIIVAFTSYHI. The Extracellular portion of the chain corresponds to 43 to 57; that stretch reads TSYGDDRNRAMRQYS. The chain crosses the membrane as a helical span at residues 58–80; it reads FTFSLAYLAFLVGELLRRCCLFA. Residues 81–101 are Cytoplasmic-facing; the sequence is EEYRHIETRYNGSLKKAIQTT. The helical transmembrane segment at 102–122 threads the bilayer; it reads FSFGHNNVLFVASLLFFVVFV. Topologically, residues 123–154 are extracellular; sequence ASNDPNGSSSVIQGNSTAEPHTEMRQTSGWQG. Residues 155 to 175 form a helical membrane-spanning segment; the sequence is LWGQFIISALLTPLVVHLLGL. Residues 176–377 lie on the Cytoplasmic side of the membrane; sequence RELSKVEESQ…LKDSELEIGG (202 aa). Residues Tyr-206, Arg-272, 278–279, and Thr-303 contribute to the 2',3'-cGAMP site; that span reads RH. Residues Tyr-206, Arg-272, Arg-278, and 300–303 each bind 3',3'-c-di-GMP; that span reads EYAT.

This sequence belongs to the TMEM173 family. In terms of assembly, homodimer.

The protein localises to the endoplasmic reticulum membrane. In terms of biological role, sensor of cytosolic DNA from bacteria and viruses that promotes autophagy. Acts by recognizing and binding cyclic GMP-AMP (cGAMP), a messenger produced by CGAS in response to DNA in the cytosol. Following cGAMP-binding, promotes the formation of autophagosomes, leading to target cytosolic DNA for degradation by the lysosome. Exhibits guanine base-specific ligand recognition. Binds 3'-3'linked cGAMP, 2'-3' linked cGAMP and 3'-3' linked c-di-GMP with much greater affinity as compared to 3'-3' linked c-di-AMP. Lacks the C-terminal tail (CTT) found in mammalian orthologs which is essential for interferon signaling. The sequence is that of Stimulator of interferon genes protein from Nematostella vectensis (Starlet sea anemone).